The following is a 406-amino-acid chain: Tryptophan synthase beta chain (406 aa).

The residue at position 99 (lysine 99) is an N6-(pyridoxal phosphate)lysine.

Belongs to the TrpB family. In terms of assembly, tetramer of two alpha and two beta chains. The cofactor is pyridoxal 5'-phosphate.

The enzyme catalyses (1S,2R)-1-C-(indol-3-yl)glycerol 3-phosphate + L-serine = D-glyceraldehyde 3-phosphate + L-tryptophan + H2O. It functions in the pathway amino-acid biosynthesis; L-tryptophan biosynthesis; L-tryptophan from chorismate: step 5/5. Functionally, the beta subunit is responsible for the synthesis of L-tryptophan from indole and L-serine. This is Tryptophan synthase beta chain from Sinorhizobium fredii (strain NBRC 101917 / NGR234).